Reading from the N-terminus, the 330-residue chain is Olfactory receptor 5P70 (330 aa).

Residues Met-1 to Asp-28 are Extracellular-facing. The N-linked (GlcNAc...) asparagine glycan is linked to Asn-8. The chain crosses the membrane as a helical span at residues Ile-29 to Ile-49. The Cytoplasmic segment spans residues Leu-50–Gln-57. A helical transmembrane segment spans residues Leu-58–Ser-78. Topologically, residues Ser-79–Ile-102 are extracellular. A disulfide bridge links Cys-100 with Cys-192. The helical transmembrane segment at Gln-103–Tyr-123 threads the bilayer. Residues Asp-124–Ser-136 lie on the Cytoplasmic side of the membrane. A helical membrane pass occupies residues Thr-137–Leu-157. At Asn-158–Val-199 the chain is on the extracellular side. A helical membrane pass occupies residues Val-200–Ser-220. Over Tyr-221–Ala-240 the chain is Cytoplasmic. Residues Phe-241–Ile-261 traverse the membrane as a helical segment. The Extracellular portion of the chain corresponds to Tyr-262 to Asn-274. Residues Lys-275–Leu-295 form a helical membrane-spanning segment. Residues Arg-296–Val-330 lie on the Cytoplasmic side of the membrane.

The protein belongs to the G-protein coupled receptor 1 family.

Its subcellular location is the cell membrane. In terms of biological role, potential odorant receptor. This chain is Olfactory receptor 5P70, found in Mus musculus (Mouse).